Here is a 428-residue protein sequence, read N- to C-terminus: Adenylosuccinate synthetase (428 aa).

GTP contacts are provided by residues 11–17 (GDEGKGK) and 39–41 (GHT). Catalysis depends on Asp-12, which acts as the Proton acceptor. Mg(2+) contacts are provided by Asp-12 and Gly-39. IMP-binding positions include 12–15 (DEGK), 37–40 (NAGH), Thr-130, Arg-144, Asn-226, Thr-241, and Arg-305. Residue His-40 is the Proton donor of the active site. 301–307 (VTTGRKR) contributes to the substrate binding site. GTP-binding positions include Arg-307, 333–335 (KLD), and 415–417 (GTG).

It belongs to the adenylosuccinate synthetase family. Homodimer. Mg(2+) serves as cofactor.

It localises to the cytoplasm. It catalyses the reaction IMP + L-aspartate + GTP = N(6)-(1,2-dicarboxyethyl)-AMP + GDP + phosphate + 2 H(+). The protein operates within purine metabolism; AMP biosynthesis via de novo pathway; AMP from IMP: step 1/2. Functionally, plays an important role in the de novo pathway and in the salvage pathway of purine nucleotide biosynthesis. Catalyzes the first committed step in the biosynthesis of AMP from IMP. The chain is Adenylosuccinate synthetase from Candida dubliniensis (strain CD36 / ATCC MYA-646 / CBS 7987 / NCPF 3949 / NRRL Y-17841) (Yeast).